A 723-amino-acid chain; its full sequence is Translation initiation factor IF-2 (723 aa).

The segment at 112-138 (KIFNNKKNKKQKPQQAPQQEVQKKKEK) is disordered. The span at 114–123 (FNNKKNKKQK) shows a compositional bias: basic residues. A tr-type G domain is found at 224–393 (ERPPVVTIMG…LLVSEMEELK (170 aa)). The interval 233–240 (GHVDHGKT) is G1. A GTP-binding site is contributed by 233–240 (GHVDHGKT). Residues 258-262 (GITQH) form a G2 region. The G3 stretch occupies residues 279–282 (DTPG). GTP contacts are provided by residues 279 to 283 (DTPGH) and 333 to 336 (NKID). Positions 333-336 (NKID) are G4. The segment at 369–371 (SAL) is G5.

It belongs to the TRAFAC class translation factor GTPase superfamily. Classic translation factor GTPase family. IF-2 subfamily.

The protein localises to the cytoplasm. One of the essential components for the initiation of protein synthesis. Protects formylmethionyl-tRNA from spontaneous hydrolysis and promotes its binding to the 30S ribosomal subunits. Also involved in the hydrolysis of GTP during the formation of the 70S ribosomal complex. The polypeptide is Translation initiation factor IF-2 (Anoxybacillus flavithermus (strain DSM 21510 / WK1)).